Here is a 460-residue protein sequence, read N- to C-terminus: Phosphoenolpyruvate carboxylase (460 aa).

This sequence belongs to the PEPCase type 2 family. In terms of assembly, homotetramer. Mg(2+) serves as cofactor.

It catalyses the reaction oxaloacetate + phosphate = phosphoenolpyruvate + hydrogencarbonate. Its function is as follows. Catalyzes the irreversible beta-carboxylation of phosphoenolpyruvate (PEP) to form oxaloacetate (OAA), a four-carbon dicarboxylic acid source for the tricarboxylic acid cycle. The polypeptide is Phosphoenolpyruvate carboxylase (Pyrobaculum arsenaticum (strain DSM 13514 / JCM 11321 / PZ6)).